Reading from the N-terminus, the 671-residue chain is DNA ligase (671 aa).

NAD(+) is bound by residues aspartate 35–aspartate 39, serine 84–leucine 85, and glutamate 113. The active-site N6-AMP-lysine intermediate is lysine 115. NAD(+)-binding residues include arginine 136, glutamate 170, lysine 285, and lysine 309. Positions 403, 406, 421, and 426 each coordinate Zn(2+). In terms of domain architecture, BRCT spans threonine 588–leucine 671.

This sequence belongs to the NAD-dependent DNA ligase family. LigA subfamily. Mg(2+) serves as cofactor. The cofactor is Mn(2+).

It carries out the reaction NAD(+) + (deoxyribonucleotide)n-3'-hydroxyl + 5'-phospho-(deoxyribonucleotide)m = (deoxyribonucleotide)n+m + AMP + beta-nicotinamide D-nucleotide.. Its function is as follows. DNA ligase that catalyzes the formation of phosphodiester linkages between 5'-phosphoryl and 3'-hydroxyl groups in double-stranded DNA using NAD as a coenzyme and as the energy source for the reaction. It is essential for DNA replication and repair of damaged DNA. This Onion yellows phytoplasma (strain OY-M) protein is DNA ligase.